A 204-amino-acid chain; its full sequence is FMN-dependent NADH:quinone oxidoreductase (204 aa).

FMN contacts are provided by residues Ser9, 15-17, 95-98, and 139-142; these read SVS, MYNF, and SRGG.

This sequence belongs to the azoreductase type 1 family. Homodimer. FMN serves as cofactor.

The enzyme catalyses 2 a quinone + NADH + H(+) = 2 a 1,4-benzosemiquinone + NAD(+). It carries out the reaction N,N-dimethyl-1,4-phenylenediamine + anthranilate + 2 NAD(+) = 2-(4-dimethylaminophenyl)diazenylbenzoate + 2 NADH + 2 H(+). In terms of biological role, quinone reductase that provides resistance to thiol-specific stress caused by electrophilic quinones. Its function is as follows. Also exhibits azoreductase activity. Catalyzes the reductive cleavage of the azo bond in aromatic azo compounds to the corresponding amines. This is FMN-dependent NADH:quinone oxidoreductase from Methylocella silvestris (strain DSM 15510 / CIP 108128 / LMG 27833 / NCIMB 13906 / BL2).